We begin with the raw amino-acid sequence, 199 residues long: uncharacterized protein (199 aa).

One can recognise a G-patch domain in the interval 112–160 (PKSLGYRVLSQYGWSPQGDTAGLGLENQGRRAPVRAFRVKNDTIGLGTK).

This is an uncharacterized protein from Schizosaccharomyces pombe (strain 972 / ATCC 24843) (Fission yeast).